Consider the following 228-residue polypeptide: Probable septum site-determining protein MinC (228 aa).

This sequence belongs to the MinC family. As to quaternary structure, interacts with MinD and FtsZ.

Its function is as follows. Cell division inhibitor that blocks the formation of polar Z ring septums. Rapidly oscillates between the poles of the cell to destabilize FtsZ filaments that have formed before they mature into polar Z rings. Prevents FtsZ polymerization. This is Probable septum site-determining protein MinC from Symbiobacterium thermophilum (strain DSM 24528 / JCM 14929 / IAM 14863 / T).